Reading from the N-terminus, the 224-residue chain is C-&gt;U-editing enzyme APOBEC-2 (224 aa).

Positions 1 to 23 are disordered; it reads MAQKEEAAEAAAPASQNGDDLEN. 2 residues coordinate Zn(2+): E60 and H98. Positions 64 to 169 constitute a CMP/dCMP-type deaminase domain; sequence GRNKTFLCYV…PEVQAALKKL (106 aa). The active-site Proton donor is E100. 2 residues coordinate Zn(2+): C128 and C131.

It belongs to the cytidine and deoxycytidylate deaminase family. As to quaternary structure, homotetramer. The cofactor is Zn(2+). In terms of tissue distribution, expressed exclusively in heart and skeletal muscle.

The enzyme catalyses cytidine(6666) in apoB mRNA + H2O + H(+) = uridine(6666) in apoB mRNA + NH4(+). In terms of biological role, probable C to U editing enzyme whose physiological substrate is not yet known. Does not display detectable apoB mRNA editing. Has a low intrinsic cytidine deaminase activity. May play a role in the epigenetic regulation of gene expression through the process of active DNA demethylation. The chain is C-&gt;U-editing enzyme APOBEC-2 (Apobec2) from Mus musculus (Mouse).